Consider the following 626-residue polypeptide: DNA (cytosine-5)-methyltransferase DRM2 (626 aa).

UBA domains are found at residues 59–101 (GFSD…ISKY) and 109–150 (SSKS…LLSC). Acidic residues predominate over residues 160–187 (VEEEDGIDWSSSDDDTNYTDMLNSDDEK). Disordered stretches follow at residues 160 to 196 (VEEE…ENGS) and 245 to 282 (TEHE…PNPM). Residues 190–232 (NSNENGSKIRSLVKMGFSELEASLAVERCGENVDIAELTDFLC) enclose the UBA 3 domain. Positions 262-276 (ESKGEPRSSVDDEPI) are enriched in basic and acidic residues. In terms of domain architecture, SAM-dependent MTase DRM-type spans 295–626 (THRSLPELAR…EVVRARMRGS (332 aa)).

Belongs to the class I-like SAM-binding methyltransferase superfamily. DRM-methyltransferase family. As to quaternary structure, interacts with RDM1. In terms of tissue distribution, expressed in roots, inflorescences and at lower levels in leaves.

The protein resides in the nucleus. The protein localises to the nucleoplasm. It catalyses the reaction a 2'-deoxycytidine in DNA + S-adenosyl-L-methionine = a 5-methyl-2'-deoxycytidine in DNA + S-adenosyl-L-homocysteine + H(+). Functionally, involved in de novo DNA methylation. Controls asymmetric and CpNpG methylation. Required for FWA gene silencing but not for the maintenance of SUP gene silencing. Functionally redundant to CMT3 to maintain non-CpG methylation. Involved in RNA-directed DNA methylation (RdDM). Acts as major DNA methyltransferase in the RdDM pathway, and is essential for RNA-directed de novo DNA methylation of cytosines in all sequence contexts. Associates with long non-coding RNA (lncRNA) produced by RNA polymerase V (Pol V). This association is dependent on AGO4 and IDN2, and results in DNA methylation of RdDM target loci. This chain is DNA (cytosine-5)-methyltransferase DRM2 (DRM2), found in Arabidopsis thaliana (Mouse-ear cress).